Reading from the N-terminus, the 356-residue chain is Putative methylthioribose-1-phosphate isomerase (356 aa).

Substrate is bound by residues 57–59 (RGA), R100, and Q206. D247 functions as the Proton donor in the catalytic mechanism. 257–258 (NK) is a binding site for substrate.

The protein belongs to the eIF-2B alpha/beta/delta subunits family. MtnA subfamily.

The catalysed reaction is 5-(methylsulfanyl)-alpha-D-ribose 1-phosphate = 5-(methylsulfanyl)-D-ribulose 1-phosphate. In terms of biological role, catalyzes the interconversion of methylthioribose-1-phosphate (MTR-1-P) into methylthioribulose-1-phosphate (MTRu-1-P). In Pyrococcus furiosus (strain ATCC 43587 / DSM 3638 / JCM 8422 / Vc1), this protein is Putative methylthioribose-1-phosphate isomerase.